Here is a 243-residue protein sequence, read N- to C-terminus: Large ribosomal subunit protein uL2 (243 aa).

Basic residues predominate over residues 1–12; the sequence is MGRRIQGQRRGR. 2 disordered regions span residues 1–38 and 198–243; these read MGRR…SDDT and VDHP…GSSE. Basic and acidic residues-rich tracts occupy residues 24–34 and 221–231; these read YKAELSHKQSE and PPGRKVGDIAS.

The protein belongs to the universal ribosomal protein uL2 family. As to quaternary structure, part of the 50S ribosomal subunit. Forms a bridge to the 30S subunit in the 70S ribosome.

Functionally, one of the primary rRNA binding proteins. Required for association of the 30S and 50S subunits to form the 70S ribosome, for tRNA binding and peptide bond formation. It has been suggested to have peptidyltransferase activity; this is somewhat controversial. Makes several contacts with the 16S rRNA in the 70S ribosome. This Haloquadratum walsbyi (strain DSM 16790 / HBSQ001) protein is Large ribosomal subunit protein uL2.